The chain runs to 162 residues: Ribosome maturation factor RimP (162 aa).

It belongs to the RimP family.

It localises to the cytoplasm. Functionally, required for maturation of 30S ribosomal subunits. This is Ribosome maturation factor RimP from Streptococcus gordonii (strain Challis / ATCC 35105 / BCRC 15272 / CH1 / DL1 / V288).